Here is a 137-residue protein sequence, read N- to C-terminus: Large ribosomal subunit protein uL16 (137 aa).

Belongs to the universal ribosomal protein uL16 family. In terms of assembly, part of the 50S ribosomal subunit.

In terms of biological role, binds 23S rRNA and is also seen to make contacts with the A and possibly P site tRNAs. This Dinoroseobacter shibae (strain DSM 16493 / NCIMB 14021 / DFL 12) protein is Large ribosomal subunit protein uL16.